The following is a 289-amino-acid chain: Elongation factor Ts (289 aa).

Positions 82-85 (TDFL) are involved in Mg(2+) ion dislocation from EF-Tu.

Belongs to the EF-Ts family.

It localises to the cytoplasm. Functionally, associates with the EF-Tu.GDP complex and induces the exchange of GDP to GTP. It remains bound to the aminoacyl-tRNA.EF-Tu.GTP complex up to the GTP hydrolysis stage on the ribosome. The polypeptide is Elongation factor Ts (Pseudomonas paraeruginosa (strain DSM 24068 / PA7) (Pseudomonas aeruginosa (strain PA7))).